Consider the following 361-residue polypeptide: MADTAHINDVPMQGKGLYSSHAALQHEAMLKALPLLQQATNTVVTNVNRNLRPLTVVEYGSAHGNNSIQPMVTILDSTPPGDIQLVFSDRPENDFNTLSTTVTTWAEGLDKAKFPHSIFPAMIPRSFYRQVVPSRSADLGFSLAALHHLDHVPKSQDGVDHQALLKRQAHLDLLQFLKLRADEIVPGGSLVLSFVSQSSSGRENYAGLVDACRNAMIDMVKDGTLPGAVAGSFYVPTYNRTLQDVQKVIEEVIPTWIAHEVFEQDCLHPAKKDLELQKSSDDYDSDEASRRYADVVVDWLMAVCAGYFLKAVKVGSDNTFTGEDAEKFLADWVKRTKHFFYKDHRDEDVVCSFIFVRLERV.

S-adenosyl-L-homocysteine contacts are provided by Y18, N66, D89, S126, and F127. Mg(2+) contacts are provided by Q156 and F233.

It belongs to the methyltransferase superfamily. Type-7 methyltransferase family. Mg(2+) is required as a cofactor.

It functions in the pathway mycotoxin biosynthesis. In terms of biological role, methyltransferase; part of the gene cluster that mediates the biosynthesis of the mycotoxin lucilactaene and the lucilactaene-related compound NG-391 that act as cell cycle inhibitors with potent growth inhibitory activity against malarial parasites, moderate growth inhibitory activity against cancer cells, and no activity against bacteria and fungi. LUC1 performs the last step of the pathway and methylates the hydroxyl group of demethyllucilactaene at C-21 to yeald lucilactaene. The pathway begins with the hybrid PKS-NRPS synthetase LUC5 which is responsible for the condensation of one acetyl-coenzyme A (CoA) unit with six malonyl-CoA units and the amide linkage of the arising heptaketide and homoserine, subsequently releasing the first intermediate prelucilactaene B. Both the cytochrome P450 monooxygenase LUC2 and the hydrolase LUC6 function in parallel in modification of prelucilactaene B. LUC6 may catalyze the 2-pyrrolidone ring formation to form prelucilactaene C from prelucilactaene B, followed by C-15 hydroxylation by the same enzyme to give prelucilactaene D, which is then converted to prelucilactaene E by epoxidation, and finally to prelucilactaene F by cyclization. Prelucilactane D, prelucilactaene E, and prelucilactaene F can be converted to dihydrolucilactaene, NG391, and lucilactaene, respectively, via C-20 methyl group hydroxylation by the cytochrome P450 monooxygenase LUC2. However, LUC2, unlike FUS8 in fusarin C biosynthesis, is not enough for the full oxidation of the C-20 methyl group into carboxylic acid, which is a prerequisite for the final methylation step. The aldehyde dehydrogenase LUC3 is involved in the biosynthesis by further oxidation of the C-20 alcoholic analog prelucilactaene G into a carboxylic derivative. This unidentified carboxylic derivative may be converted to demethyllucilactaene. As the last step, the methyltransferase LUC1 methylates the hydroxyl group at C-21 of demethyllucilactaene to generate lucilactaene. This Fusarium sp protein is Methyltransferase LUC1.